The sequence spans 205 residues: CASP-like protein 2A1 (205 aa).

Positions 1-25 (MDKSKVSTAVGGETPVGLITGSRDD) are disordered. Residues 1-34 (MDKSKVSTAVGGETPVGLITGSRDDELESGSMRT) are Cytoplasmic-facing. The chain crosses the membrane as a helical span at residues 35 to 55 (AETVLRLVPMAFCISALVLML). At 56 to 76 (KNSQTNDFGTLSYSDLGAFRY) the chain is on the extracellular side. The helical transmembrane segment at 77 to 97 (LVHANGICAGYSLLSAIIVAM) threads the bilayer. Residues 98 to 105 (PRPSTMSR) are Cytoplasmic-facing. The helical transmembrane segment at 106 to 126 (AWTFFFLDQVLTYVILAAAAV) threads the bilayer. Residues 127-156 (SVEALYLARKGDIAITWSAACVSFGGFCHK) are Extracellular-facing. Residues 157 to 177 (AITSAVITFIVVVCYALLSLV) traverse the membrane as a helical segment. The Cytoplasmic portion of the chain corresponds to 178–205 (SSYKLFSRYGAPDVSYPGKGIEVAAFHS).

Belongs to the Casparian strip membrane proteins (CASP) family. In terms of assembly, homodimer and heterodimers.

It localises to the cell membrane. The chain is CASP-like protein 2A1 from Ricinus communis (Castor bean).